A 579-amino-acid chain; its full sequence is Probable methyl-accepting chemotaxis protein BT9727_0355 (579 aa).

Residues 1–13 (MKKYWHKLSFLQK) are Cytoplasmic-facing. The chain crosses the membrane as a helical span at residues 14 to 34 (NVLLTVLVILTLVGTMGALSF). Residues 35 to 198 (NMFQNSMMSI…ASIVPSTKEK (164 aa)) are Extracellular-facing. Residues 199–219 (FIIQGLMFICISVLIATVIQF) form a helical membrane-spanning segment. Over 220-579 (LIVRNALAPL…LQELIGEFKS (360 aa)) the chain is Cytoplasmic. The region spanning 223 to 274 (RNALAPLRDLREGLRRVGEGDLNIKLEERSDDIGIINSYFNNTIEKFKGIID) is the HAMP domain. Glu-289 carries the post-translational modification Glutamate methyl ester (Glu). A Methyl-accepting transducer domain is found at 293-529 (STKENSMAVQ…NIVRVVNELS (237 aa)). Glu-548 is modified (glutamate methyl ester (Glu)).

This sequence belongs to the methyl-accepting chemotaxis (MCP) protein family.

The protein resides in the cell membrane. Its function is as follows. Chemotactic-signal transducers respond to changes in the concentration of attractants and repellents in the environment, transduce a signal from the outside to the inside of the cell, and facilitate sensory adaptation through the variation of the level of methylation. The protein is Probable methyl-accepting chemotaxis protein BT9727_0355 of Bacillus thuringiensis subsp. konkukian (strain 97-27).